Reading from the N-terminus, the 183-residue chain is Archaemetzincin (183 aa).

Position 131 (His-131) interacts with Zn(2+). Glu-132 serves as the catalytic Proton acceptor. 6 residues coordinate Zn(2+): His-135, His-141, Cys-142, Cys-147, Cys-166, and Cys-169.

The protein belongs to the peptidase M54 family. Monomer. Zn(2+) serves as cofactor.

Its function is as follows. Probable zinc metalloprotease whose natural substrate is unknown. The sequence is that of Archaemetzincin from Saccharolobus islandicus (strain L.S.2.15 / Lassen #1) (Sulfolobus islandicus).